A 250-amino-acid chain; its full sequence is Ribonuclease HII (250 aa).

Residues 66–250 (QLVAGVDEVG…TFAPVSDFFK (185 aa)) form the RNase H type-2 domain. D72, E73, and D164 together coordinate a divalent metal cation.

The protein belongs to the RNase HII family. Requires Mn(2+) as cofactor. It depends on Mg(2+) as a cofactor.

The protein resides in the cytoplasm. The catalysed reaction is Endonucleolytic cleavage to 5'-phosphomonoester.. Functionally, endonuclease that specifically degrades the RNA of RNA-DNA hybrids. In Lactobacillus acidophilus (strain ATCC 700396 / NCK56 / N2 / NCFM), this protein is Ribonuclease HII.